A 321-amino-acid polypeptide reads, in one-letter code: Glucokinase (321 aa).

An ATP-binding site is contributed by 8 to 13 (GDVGGT).

Belongs to the bacterial glucokinase family.

It is found in the cytoplasm. The enzyme catalyses D-glucose + ATP = D-glucose 6-phosphate + ADP + H(+). In Klebsiella pneumoniae (strain 342), this protein is Glucokinase.